A 266-amino-acid chain; its full sequence is Undecaprenyl-diphosphatase (266 aa).

8 consecutive transmembrane segments (helical) span residues 1–21 (MTLL…FLPV), 40–60 (LPLY…LVVL), 90–110 (LLVV…KPIF), 113–133 (LNQP…LWFT), 145–165 (LSWL…IPGI), 188–208 (FSFL…IDEV), 217–237 (PLLG…LWLF), and 245–265 (FKWF…KVAM).

Belongs to the UppP family.

It is found in the cell inner membrane. The enzyme catalyses di-trans,octa-cis-undecaprenyl diphosphate + H2O = di-trans,octa-cis-undecaprenyl phosphate + phosphate + H(+). Functionally, catalyzes the dephosphorylation of undecaprenyl diphosphate (UPP). Confers resistance to bacitracin. This is Undecaprenyl-diphosphatase from Acaryochloris marina (strain MBIC 11017).